The sequence spans 1368 residues: Kinesin-like protein KIF24 (1368 aa).

The region spanning 1 to 64 is the SAM domain; it reads MASWLYECLC…FQLIKIIKIM (64 aa). The tract at residues 89-112 is disordered; the sequence is ELRSGPRRQLNFDSPADNKDRNAS. Phosphoserine is present on residues Ser102 and Ser112. A Kinesin motor domain is found at 223–546; sequence KIRVCVRKRP…LRYADRVKEL (324 aa). 313–320 provides a ligand contact to ATP; sequence GQTGAGKT. Ser478 is subject to Phosphoserine. The interaction with MPHOSPH9 stretch occupies residues 478–709; it reads SLLALKECIR…STKCKKVQTV (232 aa). The span at 557–576 shows a compositional bias: polar residues; that stretch reads TSRNRTSGNSSPKRIQSSPG. Disordered regions lie at residues 557-584 and 602-639; these read TSRN…DKCS and GSTR…SPSQ. The residue at position 584 (Ser584) is a Phosphoserine. The residue at position 621 (Thr621) is a Phosphothreonine; by NEK2. Phosphoserine; by NEK2 is present on Ser622. Position 646 is a phosphoserine (Ser646). Disordered regions lie at residues 651-670, 729-753, 792-849, 864-938, and 952-984; these read TVRS…PLCS, HRAE…WTNI, QYRP…NTLE, GPEK…LAEK, and RGGG…EEDG. The span at 819–830 shows a compositional bias: acidic residues; that stretch reads QVEELDDSDFSE. A phosphoserine mark is found at Ser826 and Ser829. 2 stretches are compositionally biased toward polar residues: residues 839 to 849 and 871 to 881; these read QRATKQRNTLE and ERQQSLFSSPR. Over residues 882-906 the composition is skewed to basic and acidic residues; that stretch reads TGDKKDLTKSWVDSRDPINHRRAAL. Ser1012 is modified (phosphoserine). Disordered stretches follow at residues 1054–1073 and 1086–1148; these read MSLL…QLVQ and GGPV…SREA. Residues 1106-1119 show a composition bias toward polar residues; that stretch reads SSATRHLWLSSSPP. Over residues 1138–1148 the composition is skewed to basic and acidic residues; it reads HPADKLPSREA.

It belongs to the TRAFAC class myosin-kinesin ATPase superfamily. Kinesin family. Interacts with CCP110, CEP97, TALPID3. Interacts with MPHOSPH9.

It localises to the cytoplasm. Its subcellular location is the cytoskeleton. It is found in the microtubule organizing center. The protein localises to the centrosome. The protein resides in the centriole. Its function is as follows. Microtubule-dependent motor protein that acts as a negative regulator of ciliogenesis by mediating recruitment of CCP110 to mother centriole in cycling cells, leading to restrict nucleation of cilia at centrioles. Mediates depolymerization of microtubules of centriolar origin, possibly to suppress aberrant cilia formation. Following activation by NEK2 involved in disassembly of primary cilium during G2/M phase but does not disassemble fully formed ciliary axonemes. As cilium assembly and disassembly is proposed to coexist in a dynamic equilibrium may suppress nascent cilium assembly and, potentially, ciliar re-assembly in cells that have already disassembled their cilia ensuring the completion of cilium removal in the later stages of the cell cycle. Plays an important role in recruiting MPHOSPH9, a negative regulator of cilia formation to the distal end of mother centriole. This chain is Kinesin-like protein KIF24 (KIF24), found in Homo sapiens (Human).